The following is a 371-amino-acid chain: 2-oxoadipate dioxygenase/decarboxylase, chloroplastic (371 aa).

The N-terminal 50 residues, 1-50 (MISLHSSAIKASLYGSFPSSLRSTLSVSFSAGSLIRLPSVGKRNLSVVVS), are a transit peptide targeting the chloroplast. 2-oxoadipate contacts are provided by His-113 and Arg-117. His-113 provides a ligand contact to Fe(2+). His-250 is a binding site for Fe(2+). Residues Gln-296 and Tyr-320 each contribute to the 2-oxoadipate site. Residue Glu-322 participates in Fe(2+) binding.

This sequence belongs to the 2-oxoadipate dioxygenase/decarboxylase family. Fe(2+) serves as cofactor.

It is found in the plastid. It localises to the chloroplast. The enzyme catalyses 2-oxoadipate + O2 = (R)-2-hydroxyglutarate + CO2. It functions in the pathway amino-acid degradation. In terms of biological role, catalyzes the decarboxylation and hydroxylation of 2-oxoadipate (2OA) to form D-2-hydroxyglutarate (D-2-HGA). Is involved in a D-lysine catabolic pathway. The protein is 2-oxoadipate dioxygenase/decarboxylase, chloroplastic of Arabidopsis thaliana (Mouse-ear cress).